The chain runs to 383 residues: 4-hydroxy-3-methylbut-2-en-1-yl diphosphate synthase (flavodoxin) (383 aa).

[4Fe-4S] cluster contacts are provided by cysteine 277, cysteine 280, cysteine 312, and glutamate 319.

This sequence belongs to the IspG family. The cofactor is [4Fe-4S] cluster.

The enzyme catalyses (2E)-4-hydroxy-3-methylbut-2-enyl diphosphate + oxidized [flavodoxin] + H2O + 2 H(+) = 2-C-methyl-D-erythritol 2,4-cyclic diphosphate + reduced [flavodoxin]. Its pathway is isoprenoid biosynthesis; isopentenyl diphosphate biosynthesis via DXP pathway; isopentenyl diphosphate from 1-deoxy-D-xylulose 5-phosphate: step 5/6. Converts 2C-methyl-D-erythritol 2,4-cyclodiphosphate (ME-2,4cPP) into 1-hydroxy-2-methyl-2-(E)-butenyl 4-diphosphate. The protein is 4-hydroxy-3-methylbut-2-en-1-yl diphosphate synthase (flavodoxin) of Caulobacter vibrioides (strain ATCC 19089 / CIP 103742 / CB 15) (Caulobacter crescentus).